The chain runs to 235 residues: tRNA (cytidine-2'-O-)-methyltransferase TrmJ (235 aa).

Residues T77–S79, G111, I131, and P138–L140 contribute to the S-adenosyl-L-methionine site.

It belongs to the class IV-like SAM-binding methyltransferase superfamily. RNA methyltransferase TrmH family. As to quaternary structure, homodimer.

The protein resides in the cytoplasm. It carries out the reaction cytidine(32) in tRNA + S-adenosyl-L-methionine = 2'-O-methylcytidine(32) in tRNA + S-adenosyl-L-homocysteine + H(+). Catalyzes the formation of 2'O-methylated cytidine (Cm32) at position 32 in tRNA. Is specific for cytidine. The protein is tRNA (cytidine-2'-O-)-methyltransferase TrmJ of Sulfolobus acidocaldarius (strain ATCC 33909 / DSM 639 / JCM 8929 / NBRC 15157 / NCIMB 11770).